Consider the following 983-residue polypeptide: UPF0746 protein DDB_G0280809 (983 aa).

Basic and acidic residues predominate over residues 1-21 (MISNKRKEIDTINEHHEKNND). Residues 1–26 (MISNKRKEIDTINEHHEKNNDDSDGI) form a disordered region. The region spanning 42–76 (SGSTNYRELQIIAKSLGLASNGKKQLVYNRIEGYF) is the SAP domain. The segment at 391 to 413 (HTTPTSTSTSTSTSTSTYTSTST) is disordered. Positions 392–413 (TTPTSTSTSTSTSTSTYTSTST) are enriched in low complexity.

The protein belongs to the UPF0746 family.

The chain is UPF0746 protein DDB_G0280809 from Dictyostelium discoideum (Social amoeba).